The chain runs to 1402 residues: Erbin (1402 aa).

17 LRR repeats span residues 23–44 (TVTT…IFTF), 47–68 (TLEE…LFNC), 70–91 (SLHK…IANL), 93–114 (NLRE…IKNC), 116–137 (VLTI…FSQL), 139–161 (NLTQ…GRLT), 162–183 (KLQI…MNRL), 185–206 (QLER…LEQL), 208–229 (GLRE…IGSL), 231–252 (QLTY…ISTC), 254–275 (NLQD…IGSL), 277–298 (NVTT…IGGL), 300–321 (SIEE…IGQL), 323–344 (NMRT…IGNW), 346–367 (NITV…MGDM), 369–391 (KLKV…TKLQ), and 392–413 (QLTA…QKET). A phosphoserine mark is found at Ser440 and Ser444. Disordered stretches follow at residues 465 to 489 (DEDK…PYPD) and 507 to 543 (DEET…TTKS). A compositionally biased stretch (basic and acidic residues) spans 470–480 (EREAPPREGNL). Tyr483 carries the post-translational modification Phosphotyrosine. Thr485 is subject to Phosphothreonine. Basic and acidic residues predominate over residues 507-534 (DEETNEESGRDLKQHEDQQVVNKDKCVK). Phosphoserine is present on residues Ser595, Ser599, Ser600, and Ser617. A compositionally biased stretch (basic and acidic residues) spans 629–638 (NKKDDAKDAD). Residues 629-694 (NKKDDAKDAD…PVDSNSKVRQ (66 aa)) form a disordered region. A compositionally biased stretch (low complexity) spans 647–659 (NSNQNNSNCSSPS). The span at 660–689 (RMSDSVSLNTDSSQDTSLCSPVKQTPVDSN) shows a compositional bias: polar residues. Phosphoserine is present on residues Ser712, Ser849, Ser854, and Ser869. Positions 824–864 (EDTAPSPGRVEPQKASSSADVGISKSTEDLSPQRSGPTGAV) are disordered. Position 914 is a phosphothreonine (Thr914). Phosphotyrosine is present on Tyr917. Ser928 is modified (phosphoserine). The residue at position 970 (Tyr970) is a Phosphotyrosine. Disordered stretches follow at residues 990 to 1018 (WHPK…ENHS) and 1070 to 1093 (TTIQ…TRRT). Positions 1070-1084 (TTIQRQSSVSSTASV) are enriched in polar residues. Tyr1097 bears the Phosphotyrosine mark. Disordered stretches follow at residues 1107-1187 (GRTP…VPHD), 1198-1217 (AKKL…CQDD), and 1222-1274 (EEQN…VARH). 2 stretches are compositionally biased toward polar residues: residues 1128 to 1139 (GPNTSRPQSARP) and 1149 to 1164 (MSVS…PSKR). Phosphoserine occurs at positions 1150 and 1171. Phosphoserine occurs at positions 1231, 1234, and 1276. Residues 1311–1400 (EIRVRVEKDP…AVDLIIVREV (90 aa)) form the PDZ domain.

The protein belongs to the LAP (LRR and PDZ) protein family. As to quaternary structure, interacts with ERBB2, BPAG1 and ITGB4. May favor the localization of ERBB2, by restricting its presence to the basolateral membrane of epithelial cells. Also found to interact with ARVCF and delta catenin. Interacts (via C-terminus) with DST (via N-terminus). Interacts with NOD2 (via CARD domain). Isoform 2 is phosphorylated on Ser-1231 and Ser-1234.

The protein resides in the cell junction. It localises to the hemidesmosome. Its subcellular location is the nucleus membrane. The protein localises to the basolateral cell membrane. Its function is as follows. Acts as an adapter for the receptor ERBB2, in epithelia. By binding the unphosphorylated ERBB2 'Tyr-1248' receptor, it may contribute to stabilize this unphosphorylated state. Inhibits NOD2-dependent NF-kappa-B signaling and pro-inflammatory cytokine secretion. The polypeptide is Erbin (Mus musculus (Mouse)).